Here is a 453-residue protein sequence, read N- to C-terminus: Tryptophan biosynthesis protein TrpCF (453 aa).

The segment at Met1–Glu257 is indole-3-glycerol phosphate synthase. The interval Asn258–Tyr453 is N-(5'-phosphoribosyl)anthranilate isomerase.

The protein in the N-terminal section; belongs to the TrpC family. In the C-terminal section; belongs to the TrpF family. As to quaternary structure, monomer.

The catalysed reaction is N-(5-phospho-beta-D-ribosyl)anthranilate = 1-(2-carboxyphenylamino)-1-deoxy-D-ribulose 5-phosphate. It carries out the reaction 1-(2-carboxyphenylamino)-1-deoxy-D-ribulose 5-phosphate + H(+) = (1S,2R)-1-C-(indol-3-yl)glycerol 3-phosphate + CO2 + H2O. Its pathway is amino-acid biosynthesis; L-tryptophan biosynthesis; L-tryptophan from chorismate: step 3/5. The protein operates within amino-acid biosynthesis; L-tryptophan biosynthesis; L-tryptophan from chorismate: step 4/5. Its function is as follows. Bifunctional enzyme that catalyzes two sequential steps of tryptophan biosynthetic pathway. The first reaction is catalyzed by the isomerase, coded by the TrpF domain; the second reaction is catalyzed by the synthase, coded by the TrpC domain. The polypeptide is Tryptophan biosynthesis protein TrpCF (trpC) (Escherichia coli O157:H7).